Reading from the N-terminus, the 856-residue chain is Bifunctional uridylyltransferase/uridylyl-removing enzyme (856 aa).

The uridylyltransferase stretch occupies residues 1-320; that stretch reads MTLSAAPLQH…YCQVPRVTQH (320 aa). The tract at residues 321-678 is uridylyl-removing; it reads ISEYFHAVNG…ARLADDHEGL (358 aa). The HD domain occupies 439–561; it reads VDEHILMVVR…VRTPRRLAAL (123 aa). ACT domains are found at residues 679-760 and 788-856; these read QVLI…LPPQ and ILSI…ALRI.

The protein belongs to the GlnD family. Requires Mg(2+) as cofactor.

It carries out the reaction [protein-PII]-L-tyrosine + UTP = [protein-PII]-uridylyl-L-tyrosine + diphosphate. The enzyme catalyses [protein-PII]-uridylyl-L-tyrosine + H2O = [protein-PII]-L-tyrosine + UMP + H(+). With respect to regulation, uridylyltransferase (UTase) activity is inhibited by glutamine, while glutamine activates uridylyl-removing (UR) activity. Functionally, modifies, by uridylylation and deuridylylation, the PII regulatory proteins (GlnB and homologs), in response to the nitrogen status of the cell that GlnD senses through the glutamine level. Under low glutamine levels, catalyzes the conversion of the PII proteins and UTP to PII-UMP and PPi, while under higher glutamine levels, GlnD hydrolyzes PII-UMP to PII and UMP (deuridylylation). Thus, controls uridylylation state and activity of the PII proteins, and plays an important role in the regulation of nitrogen assimilation and metabolism. The sequence is that of Bifunctional uridylyltransferase/uridylyl-removing enzyme from Chromobacterium violaceum (strain ATCC 12472 / DSM 30191 / JCM 1249 / CCUG 213 / NBRC 12614 / NCIMB 9131 / NCTC 9757 / MK).